The following is an 81-amino-acid chain: uncharacterized protein (81 aa).

This is an uncharacterized protein from Acidianus bottle-shaped virus (isolate Italy/Pozzuoli) (ABV).